Here is a 135-residue protein sequence, read N- to C-terminus: FK506-binding protein 2 (135 aa).

Residues 1–17 (MLLKSLFLLFLTAIAFA) form the signal peptide. Positions 40–127 (GDLISVHYEG…VFVAELVDIA (88 aa)) constitute a PPIase FKBP-type domain. Residues 132-135 (HDEL) carry the Prevents secretion from ER motif.

This sequence belongs to the FKBP-type PPIase family. FKBP2 subfamily.

Its subcellular location is the endoplasmic reticulum. It catalyses the reaction [protein]-peptidylproline (omega=180) = [protein]-peptidylproline (omega=0). Inhibited by both FK506 and rapamycin. PPIases accelerate the folding of proteins. It catalyzes the cis-trans isomerization of proline imidic peptide bonds in oligopeptides. In Debaryomyces hansenii (strain ATCC 36239 / CBS 767 / BCRC 21394 / JCM 1990 / NBRC 0083 / IGC 2968) (Yeast), this protein is FK506-binding protein 2 (FPR2).